We begin with the raw amino-acid sequence, 166 residues long: NAD(P)H-quinone oxidoreductase subunit I, chloroplastic (166 aa).

2 consecutive 4Fe-4S ferredoxin-type domains span residues 55–84 (GRIHFEFDKCIACEVCVRVCPIDLPVVDWK) and 95–124 (LNYSIDFGICIFCGNCVEYCPTNCLSMTEE). The [4Fe-4S] cluster site is built by cysteine 64, cysteine 67, cysteine 70, cysteine 74, cysteine 104, cysteine 107, cysteine 110, and cysteine 114.

This sequence belongs to the complex I 23 kDa subunit family. As to quaternary structure, NDH is composed of at least 16 different subunits, 5 of which are encoded in the nucleus. It depends on [4Fe-4S] cluster as a cofactor.

It localises to the plastid. The protein localises to the chloroplast thylakoid membrane. The enzyme catalyses a plastoquinone + NADH + (n+1) H(+)(in) = a plastoquinol + NAD(+) + n H(+)(out). It carries out the reaction a plastoquinone + NADPH + (n+1) H(+)(in) = a plastoquinol + NADP(+) + n H(+)(out). NDH shuttles electrons from NAD(P)H:plastoquinone, via FMN and iron-sulfur (Fe-S) centers, to quinones in the photosynthetic chain and possibly in a chloroplast respiratory chain. The immediate electron acceptor for the enzyme in this species is believed to be plastoquinone. Couples the redox reaction to proton translocation, and thus conserves the redox energy in a proton gradient. The sequence is that of NAD(P)H-quinone oxidoreductase subunit I, chloroplastic from Pericome caudata (Mountain tail-leaf).